A 103-amino-acid polypeptide reads, in one-letter code: Small ribosomal subunit protein uS10 (103 aa).

The protein belongs to the universal ribosomal protein uS10 family. As to quaternary structure, part of the 30S ribosomal subunit.

Involved in the binding of tRNA to the ribosomes. The chain is Small ribosomal subunit protein uS10 from Buchnera aphidicola subsp. Cinara cedri (strain Cc).